We begin with the raw amino-acid sequence, 137 residues long: Gonadotropin subunit beta-1 (137 aa).

Positions 1–24 (MYCTHLKTLQLVVMATLWVTPVRA) are cleaved as a signal peptide. 5 disulfides stabilise this stretch: cysteine 32–cysteine 78, cysteine 46–cysteine 93, cysteine 55–cysteine 108, cysteine 59–cysteine 110, and cysteine 113–cysteine 120. Residue asparagine 36 is glycosylated (N-linked (GlcNAc...) asparagine).

The protein belongs to the glycoprotein hormones subunit beta family. As to quaternary structure, heterodimer of an alpha and a beta chain.

It is found in the secreted. Its function is as follows. Involved in gametogenesis and steroidogenesis. The sequence is that of Gonadotropin subunit beta-1 (cgba) from Oncorhynchus masou (Cherry salmon).